Consider the following 609-residue polypeptide: 2',5'-phosphodiesterase 12 (609 aa).

The transit peptide at 1–16 directs the protein to the mitochondrion; that stretch reads MWRLPGVRAALRGVRT. The segment at 203 to 231 is disordered; the sequence is PRAAEPEGGGPSSSSPSSPSPGWTETGVD. The span at 214 to 224 shows a compositional bias: low complexity; that stretch reads SSSSPSSPSPG. Residue S217 is modified to Phosphoserine. Mg(2+) is bound by residues E351, D496, and N498. The Proton donor/acceptor role is filled by D496.

This sequence belongs to the CCR4/nocturin family. Mg(2+) is required as a cofactor. Liver.

It is found in the mitochondrion matrix. It catalyses the reaction Exonucleolytic cleavage of poly(A) to 5'-AMP.. Functionally, enzyme that cleaves 2',5'-phosphodiester bond linking adenosines of the 5'-triphosphorylated oligoadenylates, triphosphorylated oligoadenylates referred as 2-5A modulates the 2-5A system. Degrades triphosphorylated 2-5A to produce AMP and ATP. Also cleaves 3',5'-phosphodiester bond of oligoadenylates. Plays a role as a negative regulator of the 2-5A system that is one of the major pathways for antiviral and antitumor functions induced by interferons (IFNs). Suppression of this enzyme increases cellular 2-5A levels and decreases viral replication in cultured small-airway epithelial cells. In Bos taurus (Bovine), this protein is 2',5'-phosphodiesterase 12 (PDE12).